The following is a 466-amino-acid chain: Alpha-1A adrenergic receptor (466 aa).

Residues 1-25 (MVFLSGNASDSSNCTHPPAPVNISK) lie on the Extracellular side of the membrane. N7, N13, and N22 each carry an N-linked (GlcNAc...) asparagine glycan. Residues 26–51 (AILLGVILGGLILFGVLGNILVILSV) traverse the membrane as a helical segment. Topologically, residues 52–63 (ACHRHLHSVTHY) are cytoplasmic. Residues 64–89 (YIVNLAVADLLLTSTVLPFSAIFEIL) form a helical membrane-spanning segment. Residues 90–99 (GYWAFGRVFC) lie on the Extracellular side of the membrane. The helical transmembrane segment at 100 to 122 (NIWAAVDVLCCTASIISLCVISI) threads the bilayer. The Cytoplasmic segment spans residues 123–143 (DRYIGVSYPLRYPTIVTQRRG). The chain crosses the membrane as a helical span at residues 144–168 (LRALLCVWAFSLVISVGPLFGWRQP). Residues 169 to 181 (APDDETICQINEE) are Extracellular-facing. A helical membrane pass occupies residues 182-205 (PGYVLFSALGSFYVPLTIILAMYC). Residues 206-272 (RVYVVAKRES…KFSREKKAAK (67 aa)) are Cytoplasmic-facing. The chain crosses the membrane as a helical span at residues 273–297 (TLGIVVGCFVLCWLPFFLVMPIGSF). Topologically, residues 298–304 (FPDFKPP) are extracellular. A helical membrane pass occupies residues 305–329 (ETVFKIVFWLGYLNSCINPIIYPCS). The Cytoplasmic portion of the chain corresponds to 330 to 466 (SQEFKKAFQN…ISLSENGEEV (137 aa)). Residues 334-349 (KKAFQNVLKIQCLRRK) carry the Nuclear localization signal motif. C345 is lipidated: S-palmitoyl cysteine.

Belongs to the G-protein coupled receptor 1 family. Adrenergic receptor subfamily. ADRA1A sub-subfamily. In terms of assembly, homo- and heterooligomer. Heterooligomerizes with ADRA1B homooligomers in cardiac myocytes. Interacts with CAVIN4. Abundant in liver, vas deferens, brain, and aorta, but not in heart.

Its subcellular location is the nucleus membrane. The protein resides in the cell membrane. It is found in the cytoplasm. It localises to the membrane. The protein localises to the caveola. Functionally, this alpha-adrenergic receptor mediates its action by association with G proteins that activate a phosphatidylinositol-calcium second messenger system. Its effect is mediated by G(q) and G(11) proteins. Nuclear ADRA1A-ADRA1B heterooligomers regulate phenylephrine (PE)-stimulated ERK signaling in cardiac myocytes. This Oryctolagus cuniculus (Rabbit) protein is Alpha-1A adrenergic receptor (ADRA1A).